The sequence spans 498 residues: Probable malate:quinone oxidoreductase 2 (498 aa).

Belongs to the MQO family. FAD is required as a cofactor.

It catalyses the reaction (S)-malate + a quinone = a quinol + oxaloacetate. It participates in carbohydrate metabolism; tricarboxylic acid cycle; oxaloacetate from (S)-malate (quinone route): step 1/1. This chain is Probable malate:quinone oxidoreductase 2, found in Staphylococcus aureus (strain MW2).